The primary structure comprises 221 residues: Ribosomal RNA large subunit methyltransferase E (221 aa).

S-adenosyl-L-methionine is bound by residues Gly-60, Trp-62, Asp-89, Asp-105, and Asp-134. Lys-174 acts as the Proton acceptor in catalysis. Positions 199–221 (KPKASRDKSSETFLLGRQLKHPG) are disordered.

The protein belongs to the class I-like SAM-binding methyltransferase superfamily. RNA methyltransferase RlmE family.

The protein localises to the cytoplasm. The enzyme catalyses uridine(2552) in 23S rRNA + S-adenosyl-L-methionine = 2'-O-methyluridine(2552) in 23S rRNA + S-adenosyl-L-homocysteine + H(+). In terms of biological role, specifically methylates the uridine in position 2552 of 23S rRNA at the 2'-O position of the ribose in the fully assembled 50S ribosomal subunit. The polypeptide is Ribosomal RNA large subunit methyltransferase E (Ralstonia nicotianae (strain ATCC BAA-1114 / GMI1000) (Ralstonia solanacearum)).